A 447-amino-acid chain; its full sequence is F-box only protein 5 (447 aa).

Residues Ser-94 and Ser-102 each carry the phosphoserine modification. The tract at residues 135–244 is interaction with EVI5; that stretch reads ALETSRLYED…IGRKMGLECV (110 aa). An F-box domain is found at 250 to 296; that stretch reads LFRRGLRHVLATILAQLSDMDLINVSKVSTTWKKILEDDKGAFQLYS. The segment at 261 to 339 is sufficient for interaction with RPS6KA2; Prevents association of CDC20 with RPS6KA2; the sequence is TILAQLSDMD…KSAAQTSLKK (79 aa). Positions 261–409 are requires for efficient binding to CDC20; sequence TILAQLSDMD…GCGFDYCTKC (149 aa). The tract at residues 305 to 447 is inhibits APC ubiquitin ligase activity; sequence NNNKFSPHAS…KKSKKNLRRL (143 aa). The segment at 322-325 is competitively blocks access of APC substrates to the D-box coreceptor formed by FZR1 and ANAPC10; sequence RTPL. The segment at 337–358 is disordered; sequence LKKDAQTKLSNQGDQKGSTYSR. The span at 343 to 357 shows a compositional bias: polar residues; the sequence is TKLSNQGDQKGSTYS. The ZBR-type zinc finger occupies 374 to 422; it reads SLKACIRCNSPAKYDCYLQRATCKREGCGFDYCTKCLCNYHTTKDCSDG. Residues Cys-378, Cys-381, Cys-396, Cys-401, Cys-406, Cys-409, His-414, and Cys-419 each coordinate Zn(2+). An allows a rapid multiple mono-ubiquitination of the APC substrate, but strongly inhibits the slow ubiquitin chain elongation catalyzed by UBCH10 region spans residues 378 to 420; sequence CIRCNSPAKYDCYLQRATCKREGCGFDYCTKCLCNYHTTKDCS. The interval 437-447 is sufficient to suppress UBE2S activity; essential for interaction with UBE2S; competitively inhibits the rapide ubiquitin chain elongation by UBE2D1 which blocks UBE2D1 with APC; indispensable for recruitment and position of FBXO5 to the catalytic site of APC; abrogates the inhibition of ubiquitin chain assembly primarily catalyzed by UBE2S; inhibits the ubiquitination by either UBE2C or UBE2D1; sequence TKKSKKNLRRL.

In terms of assembly, part of a SCF (SKP1-cullin-F-box) protein ligase complex. Interacts with BTRC; mediates proteolysis by the SCF ubiquitin ligase complex leading to activation of APC in late mitosis and subsequent mitotic progression. Interacts with FZR1/CDH1 and the N-terminal substrate-binding domain of CDC20; prevents APC activation. Also interacts with EVI5 which blocks its phosphorylation by PLK1 and prevents its subsequent binding to BTRC and degradation. Interacts simultaneously with anaphase promoting complex (APC), through at least ANAPC2, CDC23, CDC27, the APC substrate GMNN and the APC activator FZR1. Interacts with UBE2S; interferes with the activity of UBE2S mainly by disrupting the dynamic electrostatic association between the C-terminal tail of UBE2S and ANAPC2. Interacts with RPS6KA2; cooperates to induce the metaphase arrest of early blastomeres; increases and stabilizes interaction of FBXO5 with CDC20. Phosphorylation by CDK2 and subsequently by PLK1 triggers degradation during early mitosis through ubiquitin-mediated proteolysis by the SCF ubiquitin ligase complex containing the F-box protein BTRC. This degradation is necessary for the activation of APC in late mitosis and subsequent mitotic progression. Phosphorylated by RPS6KA2; increases and stabilizes interaction with CDC20. Post-translationally, ubiquitinated by the SCF(BTRC) complex following phosphorylation by PLK1. Undergoes both 'Lys-11' and 'Lys-48'-linked polyubiquitination by APC-FZR1 complex leading to degradation by proteasome during G1 phase. Degraded through the SCF(BTRC) complex; degradation occurs during oocyte maturation, between germinal vesicle breakdown (GVBD) and meiosis I, and is required for the meiosis I-meiosis II transition.

Its subcellular location is the nucleus. It localises to the cytoplasm. The protein localises to the cytoskeleton. The protein resides in the spindle. It participates in protein modification; protein ubiquitination. Regulator of APC activity during mitotic and meiotic cell cycle. During mitotic cell cycle plays a role as both substrate and inhibitor of APC-FZR1 complex. During G1 phase, plays a role as substrate of APC-FZR1 complex E3 ligase. Then switches as an inhibitor of APC-FZR1 complex during S and G2 leading to cell-cycle commitment. As APC inhibitor, prevents the degradation of APC substrates at multiple levels: by interacting with APC and blocking access of APC substrates to the D-box coreceptor, formed by FZR1 and ANAPC10; by suppressing ubiquitin ligation and chain elongation by APC by preventing the UBE2C and UBE2S activities. Plays a role in genome integrity preservation by coordinating DNA replication with mitosis through APC inhibition in interphase to stabilize CCNA2 and GMNN in order to promote mitosis and prevent rereplication and DNA damage-induced cellular senescence. During oocyte maturation, plays a role in meiosis through inactivation of APC-FZR1 complex. Inhibits APC through RPS6KA2 interaction that increases FBXO5 affiniy for CDC20 leading to the metaphase arrest of the second meiotic division before fertilization. Controls entry into the first meiotic division through inactivation of APC-FZR1 complex. Promotes migration and osteogenic differentiation of mesenchymal stem cells. This chain is F-box only protein 5, found in Homo sapiens (Human).